A 255-amino-acid chain; its full sequence is F-box/SPRY domain-containing protein 1 (255 aa).

The 49-residue stretch at 3–51 (DPVAALCNYNVLEVIFSYLELEDLNHCSQVCKSWYHFLNDENSDVWRWH) folds into the F-box domain. The B30.2/SPRY domain occupies 61–253 (LKSDLLASVS…VSMVYLGTPL (193 aa)).

This sequence belongs to the FBXO45/Fsn family. As to quaternary structure, component of an E3 ubiquitin ligase complex composed of hiw and Fsn.

The protein resides in the synapse. It functions in the pathway protein modification; protein ubiquitination. Required in the presynaptic motoneuron to down-regulate the levels of wnd and restrain synaptic terminal growth at the neuromuscular junction (NMJ). This chain is F-box/SPRY domain-containing protein 1, found in Drosophila yakuba (Fruit fly).